A 314-amino-acid chain; its full sequence is Ribonuclease Z (314 aa).

Positions 62, 64, 66, 67, 139, 210, and 268 each coordinate Zn(2+). Asp66 serves as the catalytic Proton acceptor.

Belongs to the RNase Z family. In terms of assembly, homodimer. Zn(2+) serves as cofactor.

The enzyme catalyses Endonucleolytic cleavage of RNA, removing extra 3' nucleotides from tRNA precursor, generating 3' termini of tRNAs. A 3'-hydroxy group is left at the tRNA terminus and a 5'-phosphoryl group is left at the trailer molecule.. In terms of biological role, zinc phosphodiesterase, which displays some tRNA 3'-processing endonuclease activity. Probably involved in tRNA maturation, by removing a 3'-trailer from precursor tRNA. The sequence is that of Ribonuclease Z from Rippkaea orientalis (strain PCC 8801 / RF-1) (Cyanothece sp. (strain PCC 8801)).